The sequence spans 149 residues: Transcription factor bHLH153 (149 aa).

Residues 27–76 enclose the bHLH domain; the sequence is RHKSDLSFSSKERKDKVGERISALQQIVSPYGKTDTASVLLDAMHYIEFL.

Belongs to the bHLH protein family.

The protein localises to the nucleus. This Arabidopsis thaliana (Mouse-ear cress) protein is Transcription factor bHLH153.